A 121-amino-acid chain; its full sequence is Small ribosomal subunit protein uS13 (121 aa).

The disordered stretch occupies residues 94 to 121; sequence GLPVRGQRTRTNSRTRKGPKKGAAALKK.

The protein belongs to the universal ribosomal protein uS13 family. Part of the 30S ribosomal subunit. Forms a loose heterodimer with protein S19. Forms two bridges to the 50S subunit in the 70S ribosome.

Functionally, located at the top of the head of the 30S subunit, it contacts several helices of the 16S rRNA. In the 70S ribosome it contacts the 23S rRNA (bridge B1a) and protein L5 of the 50S subunit (bridge B1b), connecting the 2 subunits; these bridges are implicated in subunit movement. Contacts the tRNAs in the A and P-sites. In Leptothrix cholodnii (strain ATCC 51168 / LMG 8142 / SP-6) (Leptothrix discophora (strain SP-6)), this protein is Small ribosomal subunit protein uS13.